We begin with the raw amino-acid sequence, 253 residues long: 5-oxoprolinase subunit A (253 aa).

Belongs to the LamB/PxpA family. Forms a complex composed of PxpA, PxpB and PxpC.

The catalysed reaction is 5-oxo-L-proline + ATP + 2 H2O = L-glutamate + ADP + phosphate + H(+). Its function is as follows. Catalyzes the cleavage of 5-oxoproline to form L-glutamate coupled to the hydrolysis of ATP to ADP and inorganic phosphate. The polypeptide is 5-oxoprolinase subunit A (Bacillus cereus (strain AH187)).